The following is a 157-amino-acid chain: Transcriptional repressor NrdR (157 aa).

A disordered region spans residues 1–24 (MRCPKCGGNKSSVVDSRQAEDGNT). A zinc finger spans residues 3–34 (CPKCGGNKSSVVDSRQAEDGNTIRRRRECEEC). The 91-residue stretch at 49 to 139 (LVVVKKDGTR…VYRSFKDVGE (91 aa)) folds into the ATP-cone domain.

It belongs to the NrdR family. The cofactor is Zn(2+).

Functionally, negatively regulates transcription of bacterial ribonucleotide reductase nrd genes and operons by binding to NrdR-boxes. The chain is Transcriptional repressor NrdR from Streptococcus sanguinis (strain SK36).